Consider the following 521-residue polypeptide: Glutamate--cysteine ligase (521 aa).

The protein belongs to the glutamate--cysteine ligase type 1 family. Type 1 subfamily.

The catalysed reaction is L-cysteine + L-glutamate + ATP = gamma-L-glutamyl-L-cysteine + ADP + phosphate + H(+). Its pathway is sulfur metabolism; glutathione biosynthesis; glutathione from L-cysteine and L-glutamate: step 1/2. The protein is Glutamate--cysteine ligase of Aliivibrio fischeri (strain MJ11) (Vibrio fischeri).